The sequence spans 374 residues: Pulmonary surfactant-associated protein D (374 aa).

Positions 1–19 (MLHFLSMLVLLVQPLGDLG) are cleaved as a signal peptide. Residues Cys-34 and Cys-39 each carry the S-nitrosocysteine modification. The interval 40–221 (SPTENGLPGR…RGIKGESGLP (182 aa)) is disordered. The 177-residue stretch at 45–221 (GLPGRDGRDG…RGIKGESGLP (177 aa)) folds into the Collagen-like domain. Residues 49 to 64 (RDGRDGREGPRGEKGD) are compositionally biased toward basic and acidic residues. A Hydroxyproline modification is found at Pro-77. The residue at position 86 (Lys-86) is a 5-hydroxylysine. N-linked (GlcNAc...) asparagine glycosylation occurs at Asn-89. Pro-95 carries the post-translational modification Hydroxyproline. 5-hydroxylysine is present on Lys-98. Position 109 is a phosphoserine (Ser-109). 2 stretches are compositionally biased toward low complexity: residues 137-163 (KGEA…PAGP) and 170-200 (PGEQ…RGPP). Pro-170 and Pro-176 each carry hydroxyproline. The span at 203–215 (KGDRGAPGDRGIK) shows a compositional bias: basic and acidic residues. The stretch at 222 to 253 (DSAALRQQMEALNGKLQRLEAAFSRYKKAALF) forms a coiled coil. One can recognise a C-type lectin domain in the interval 259–374 (VGDKIFRAAN…GEQRLVICEF (116 aa)). Disulfide bonds link Cys-280–Cys-372 and Cys-350–Cys-364.

Belongs to the SFTPD family. As to quaternary structure, oligomeric complex of 4 set of homotrimers. S-nitrosylation at Cys-34 and Cys-39 alters the quaternary structure which results in a pro-inflammatory chemoattractive signaling activity with macrophages.

Its subcellular location is the secreted. It localises to the extracellular space. The protein localises to the extracellular matrix. The protein resides in the surface film. Functionally, contributes to the lung's defense against inhaled microorganisms, organic antigens and toxins. Interacts with compounds such as bacterial lipopolysaccharides, oligosaccharides and fatty acids and modulates leukocyte action in immune response. May participate in the extracellular reorganization or turnover of pulmonary surfactant. Binds strongly maltose residues and to a lesser extent other alpha-glucosyl moieties. This Rattus norvegicus (Rat) protein is Pulmonary surfactant-associated protein D (Sftpd).